The following is a 492-amino-acid chain: Probable cobyric acid synthase (492 aa).

Residues 248–434 (PVRIAVVRLP…MHGLFQNPGA (187 aa)) enclose the GATase cobBQ-type domain. Cys-327 serves as the catalytic Nucleophile. His-426 is a catalytic residue.

The protein belongs to the CobB/CobQ family. CobQ subfamily.

The protein operates within cofactor biosynthesis; adenosylcobalamin biosynthesis. Catalyzes amidations at positions B, D, E, and G on adenosylcobyrinic A,C-diamide. NH(2) groups are provided by glutamine, and one molecule of ATP is hydrogenolyzed for each amidation. The chain is Probable cobyric acid synthase from Methanoculleus marisnigri (strain ATCC 35101 / DSM 1498 / JR1).